An 88-amino-acid polypeptide reads, in one-letter code: HssA/B-like protein 9 (88 aa).

The segment covering 1–14 (MSILSALTSISNPM) has biased composition (polar residues). Residues 1–26 (MSILSALTSISNPMKSSKSSVANGGG) are disordered.

The protein belongs to the hssA/B family.

The polypeptide is HssA/B-like protein 9 (hssl9) (Dictyostelium discoideum (Social amoeba)).